Reading from the N-terminus, the 148-residue chain is Hemoglobin subunit beta-A (148 aa).

The region spanning 3–148 (DWTDAERAAI…VVSALGRQYH (146 aa)) is the Globin domain. His64 and His93 together coordinate heme b.

Belongs to the globin family. In terms of assembly, heterotetramer of two alpha chains and two beta chains. As to expression, red blood cells.

Functionally, involved in oxygen transport from gills to the various peripheral tissues. The chain is Hemoglobin subunit beta-A (hbb1) from Seriola quinqueradiata (Five-ray yellowtail).